Here is a 427-residue protein sequence, read N- to C-terminus: Succinate--CoA ligase [ADP-forming] subunit beta, mitochondrial (427 aa).

Residues 1–30 constitute a mitochondrion transit peptide; it reads MYSRKSLSLISKCGQLSRLNAQAALQARRH. Residues 39-284 form the ATP-grasp domain; it reads AQLLREYGIG…LSQEDPDEVK (246 aa). Residues lysine 76 and 83 to 85 each bind ATP; that span reads GRG. A Phosphoserine modification is found at serine 102. Glutamate 144 provides a ligand contact to ATP. Residues asparagine 236 and aspartate 253 each contribute to the Mg(2+) site. A phosphoserine mark is found at serine 263 and serine 276. Residues asparagine 304 and 361–363 contribute to the substrate site; that span reads GIV.

The protein belongs to the succinate/malate CoA ligase beta subunit family. In terms of assembly, heterodimer of an alpha and a beta subunit. It depends on Mg(2+) as a cofactor.

The protein resides in the mitochondrion. It carries out the reaction succinate + ATP + CoA = succinyl-CoA + ADP + phosphate. It participates in carbohydrate metabolism; tricarboxylic acid cycle; succinate from succinyl-CoA (ligase route): step 1/1. Succinyl-CoA synthetase functions in the citric acid cycle (TCA), coupling the hydrolysis of succinyl-CoA to the synthesis of ATP and thus represents the only step of substrate-level phosphorylation in the TCA. The beta subunit provides nucleotide specificity of the enzyme and binds the substrate succinate, while the binding sites for coenzyme A and phosphate are found in the alpha subunit. This Saccharomyces cerevisiae (strain ATCC 204508 / S288c) (Baker's yeast) protein is Succinate--CoA ligase [ADP-forming] subunit beta, mitochondrial.